The following is a 505-amino-acid chain: 4-alpha-glucanotransferase (505 aa).

This sequence belongs to the disproportionating enzyme family.

The protein resides in the cytoplasm. The enzyme catalyses Transfers a segment of a (1-&gt;4)-alpha-D-glucan to a new position in an acceptor, which may be glucose or a (1-&gt;4)-alpha-D-glucan.. The protein is 4-alpha-glucanotransferase (malQ) of Synechocystis sp. (strain ATCC 27184 / PCC 6803 / Kazusa).